Here is a 344-residue protein sequence, read N- to C-terminus: Cyclin-D1-binding protein 1 homolog (344 aa).

The interval 191–215 (SQDPFGDVLDDDDDDEGGRGNQDRY) is disordered.

This sequence belongs to the CCNDBP1 family.

It localises to the cytoplasm. The protein localises to the nucleus. In terms of biological role, may negatively regulate cell cycle progression. The protein is Cyclin-D1-binding protein 1 homolog (ccndbp1) of Danio rerio (Zebrafish).